The following is a 129-amino-acid chain: Replication initiation control protein YabA (129 aa).

Histidine 103, cysteine 105, cysteine 119, and cysteine 122 together coordinate Zn(2+).

The protein belongs to the YabA family. As to quaternary structure, homotetramer. Interacts with both DnaA and DnaN, acting as a bridge between these two proteins. Requires Zn(2+) as cofactor.

The protein resides in the cytoplasm. It is found in the nucleoid. Functionally, involved in control of chromosome replication initiation. Inhibits the cooperative binding of DnaA to the oriC region, thus negatively regulating initiation of chromosome replication. Inhibits the ability of DnaA-ATP to form a helix on DNA; does not disassemble preformed DnaA-DNA helices. Decreases the residence time of DnaA on the chromosome at its binding sites (oriC, replication forks and promoter-binding sites). Tethers DnaA to the replication machinery via the DNA polymerase beta sliding clamp subunit (dnaN). Associates with oriC and other DnaA targets on the chromosome in a DnaA-dependent manner. The chain is Replication initiation control protein YabA from Listeria monocytogenes serotype 4b (strain CLIP80459).